A 335-amino-acid polypeptide reads, in one-letter code: 5-formaminoimidazole-4-carboxamide-1-(beta)-D-ribofuranosyl 5'-monophosphate synthetase (335 aa).

Positions 21 and 86 each coordinate 5-amino-1-(5-phospho-beta-D-ribosyl)imidazole-4-carboxamide. Residues 107 to 315 (RELLRWEADQ…YFDKPMDMGE (209 aa)) form the ATP-grasp domain. Residues 137–189 (PTEV…VPAY) and glutamate 211 each bind ATP. Asparagine 231 is a binding site for 5-amino-1-(5-phospho-beta-D-ribosyl)imidazole-4-carboxamide. Residues glutamate 270 and glutamate 283 each contribute to the Mg(2+) site.

The protein belongs to the phosphohexose mutase family. Requires Mg(2+) as cofactor. It depends on Mn(2+) as a cofactor.

It carries out the reaction 5-amino-1-(5-phospho-beta-D-ribosyl)imidazole-4-carboxamide + formate + ATP = 5-formamido-1-(5-phospho-D-ribosyl)imidazole-4-carboxamide + ADP + phosphate. It functions in the pathway purine metabolism; IMP biosynthesis via de novo pathway; 5-formamido-1-(5-phospho-D-ribosyl)imidazole-4-carboxamide from 5-amino-1-(5-phospho-D-ribosyl)imidazole-4-carboxamide (formate route): step 1/1. Its function is as follows. Catalyzes the ATP- and formate-dependent formylation of 5-aminoimidazole-4-carboxamide-1-beta-d-ribofuranosyl 5'-monophosphate (AICAR) to 5-formaminoimidazole-4-carboxamide-1-beta-d-ribofuranosyl 5'-monophosphate (FAICAR) in the absence of folates. The protein is 5-formaminoimidazole-4-carboxamide-1-(beta)-D-ribofuranosyl 5'-monophosphate synthetase of Pyrobaculum arsenaticum (strain DSM 13514 / JCM 11321 / PZ6).